The following is a 167-amino-acid chain: Biotin carboxyl carrier protein of acetyl-CoA carboxylase (167 aa).

The tract at residues 53 to 91 (SGFSQERPIPTDPKKDTIKETTTENSETSTTTSSGDFIS) is disordered. Residues 64-74 (DPKKDTIKETT) show a composition bias toward basic and acidic residues. Low complexity predominate over residues 75 to 86 (TENSETSTTTSS). The region spanning 87–163 (GDFISSPLVG…QFGSKLFRIA (77 aa)) is the Biotinyl-binding domain. K129 bears the N6-biotinyllysine mark.

Homodimer.

The protein operates within lipid metabolism; fatty acid biosynthesis. In terms of biological role, this protein is a component of the acetyl coenzyme A carboxylase complex; first, biotin carboxylase catalyzes the carboxylation of the carrier protein and then the transcarboxylase transfers the carboxyl group to form malonyl-CoA. The chain is Biotin carboxyl carrier protein of acetyl-CoA carboxylase (accB) from Chlamydia pneumoniae (Chlamydophila pneumoniae).